Consider the following 389-residue polypeptide: Putative DNA processing protein DprA (389 aa).

Belongs to the DprA/Smf family.

In terms of biological role, may help load RecA onto ssDNA. In Mycobacterium tuberculosis (strain CDC 1551 / Oshkosh), this protein is Putative DNA processing protein DprA.